We begin with the raw amino-acid sequence, 377 residues long: Probable staphylococcal-like nuclease CAN3 (377 aa).

The N-myristoyl glycine moiety is linked to residue Gly-2. The S-palmitoyl cysteine moiety is linked to residue Cys-7. The segment at 15–57 is disordered; sequence GDHYPYYKPTSRPHYQPPHYHGQPAAPPAPPQQQPLGPHGVTP. Over residues 27–38 the composition is skewed to low complexity; that stretch reads PHYQPPHYHGQP. One can recognise a TNase-like domain in the interval 177–353; it reads NTLPVYDKCI…KAANRGLWAS (177 aa). Asp-190 contributes to the Ca(2+) binding site. The active site involves Arg-260. Asp-265 serves as a coordination point for Ca(2+). Active-site residues include Glu-268 and Arg-302.

It belongs to the thermonuclease family. Ca(2+) is required as a cofactor.

It is found in the cell membrane. Functionally, enzyme that catalyzes the hydrolysis of both DNA and RNA at the 5' position of the phosphodiester bond. This is Probable staphylococcal-like nuclease CAN3 from Oryza sativa subsp. japonica (Rice).